Consider the following 450-residue polypeptide: Methionine aminopeptidase 2 (450 aa).

Positions 1–99 (MAVQAPEVDK…LFPNSQYPEG (99 aa)) are disordered. Residues 33–49 (GDEDAENEESDEDDDQG) show a composition bias toward acidic residues. Residues 60 to 75 (KKKRKRKPKKKKKKGV) show a composition bias toward basic residues. H200 provides a ligand contact to substrate. The a divalent metal cation site is built by D220, D231, and H300. A substrate-binding site is contributed by H308. A divalent metal cation contacts are provided by E336 and E431.

The protein belongs to the peptidase M24A family. Methionine aminopeptidase eukaryotic type 2 subfamily. It depends on Co(2+) as a cofactor. Requires Zn(2+) as cofactor. The cofactor is Mn(2+). Fe(2+) is required as a cofactor.

It is found in the cytoplasm. It carries out the reaction Release of N-terminal amino acids, preferentially methionine, from peptides and arylamides.. Its function is as follows. Cotranslationally removes the N-terminal methionine from nascent proteins. The N-terminal methionine is often cleaved when the second residue in the primary sequence is small and uncharged (Met-Ala-, Cys, Gly, Pro, Ser, Thr, or Val). This chain is Methionine aminopeptidase 2, found in Uncinocarpus reesii (strain UAMH 1704).